We begin with the raw amino-acid sequence, 341 residues long: tRNA N6-adenosine threonylcarbamoyltransferase (341 aa).

Residues His-111 and His-115 each coordinate Fe cation. Substrate contacts are provided by residues 133 to 137 (AVSGG), Asp-166, Gly-179, Asp-183, and Asn-273. Asp-301 contacts Fe cation.

This sequence belongs to the KAE1 / TsaD family. The cofactor is Fe(2+).

It localises to the cytoplasm. It carries out the reaction L-threonylcarbamoyladenylate + adenosine(37) in tRNA = N(6)-L-threonylcarbamoyladenosine(37) in tRNA + AMP + H(+). Functionally, required for the formation of a threonylcarbamoyl group on adenosine at position 37 (t(6)A37) in tRNAs that read codons beginning with adenine. Is involved in the transfer of the threonylcarbamoyl moiety of threonylcarbamoyl-AMP (TC-AMP) to the N6 group of A37, together with TsaE and TsaB. TsaD likely plays a direct catalytic role in this reaction. This chain is tRNA N6-adenosine threonylcarbamoyltransferase, found in Geobacter metallireducens (strain ATCC 53774 / DSM 7210 / GS-15).